Here is a 303-residue protein sequence, read N- to C-terminus: INGFGRIGRIVFRAAQKRSDIEIVAINDLLDAEYMAYMLKYDSTHGRFDGTVEVKDGHLVVNGKKIRVTAERDPANLKWDEVGVDVVAEATGIFLTDETARKHITAGAKKVVLTGPSKDNTPMFVRGANFDAYAGQDIVSNASCTTNCLAPLAKVINDNFGIVEGLMTTVHATTATQKTVDGPSHKDWRGGRGAAQNIIPSSTGAAKAVGKVLPELNGKLTGMAFRVPTPNVSVVDLTVRLEKAASYEEIKKAIKAASEGAMKGVLGYTEDDVVSTDFNGEVCTSVFDAKAGIALNDNFVKLV.

NAD(+)-binding positions include 6 to 7, D28, R72, and T114; that span reads RI. Residues 143–145, T174, 203–204, and R226 contribute to the D-glyceraldehyde 3-phosphate site; these read SCT and TG. Catalysis depends on C144, which acts as the Nucleophile.

Belongs to the glyceraldehyde-3-phosphate dehydrogenase family. Homotetramer.

The protein resides in the cytoplasm. It carries out the reaction D-glyceraldehyde 3-phosphate + phosphate + NAD(+) = (2R)-3-phospho-glyceroyl phosphate + NADH + H(+). The protein operates within carbohydrate degradation; glycolysis; pyruvate from D-glyceraldehyde 3-phosphate: step 1/5. Catalyzes the oxidative phosphorylation of glyceraldehyde 3-phosphate (G3P) to 1,3-bisphosphoglycerate (BPG) using the cofactor NAD. The first reaction step involves the formation of a hemiacetal intermediate between G3P and a cysteine residue, and this hemiacetal intermediate is then oxidized to a thioester, with concomitant reduction of NAD to NADH. The reduced NADH is then exchanged with the second NAD, and the thioester is attacked by a nucleophilic inorganic phosphate to produce BPG. This Klebsiella pneumoniae protein is Glyceraldehyde-3-phosphate dehydrogenase (gap).